We begin with the raw amino-acid sequence, 519 residues long: Ribonuclease Y 1 (519 aa).

The helical transmembrane segment at 2–22 (IILYIILAIIAIVVGYCAGFF) threads the bilayer. The segment at 84 to 113 (QKQEDRLLQREDSLDRKDNSFEKRENSLER) is disordered. The KH domain occupies 209 to 294 (TITVVSLPND…EMVEKAKKEM (86 aa)). An HD domain is found at 335–428 (VLNHSIEVAN…VAAANSISAA (94 aa)).

It belongs to the RNase Y family.

Its subcellular location is the cell membrane. Functionally, endoribonuclease that initiates mRNA decay. The sequence is that of Ribonuclease Y 1 from Pediococcus pentosaceus (strain ATCC 25745 / CCUG 21536 / LMG 10740 / 183-1w).